The chain runs to 92 residues: Large ribosomal subunit protein bL34m (92 aa).

Residues 1–46 constitute a mitochondrion transit peptide; it reads MAVLAGSLLGPTSRSAALLGGRWLQPRAWLGFPDAWGLPTPQQARG. Serine 71 is subject to Phosphoserine.

This sequence belongs to the bacterial ribosomal protein bL34 family. Component of the mitochondrial large ribosomal subunit (mt-LSU). Mature mammalian 55S mitochondrial ribosomes consist of a small (28S) and a large (39S) subunit. The 28S small subunit contains a 12S ribosomal RNA (12S mt-rRNA) and 30 different proteins. The 39S large subunit contains a 16S rRNA (16S mt-rRNA), a copy of mitochondrial valine transfer RNA (mt-tRNA(Val)), which plays an integral structural role, and 52 different proteins.

The protein resides in the mitochondrion. The polypeptide is Large ribosomal subunit protein bL34m (MRPL34) (Homo sapiens (Human)).